A 658-amino-acid chain; its full sequence is Carnitine O-palmitoyltransferase 2, mitochondrial (658 aa).

The transit peptide at 1-25 (MVPRLLLRAWPRGPAVGPGAPSRPL) directs the protein to the mitochondrion. The Mitochondrial matrix portion of the chain corresponds to 26–178 (SAGSGPGQYL…GLLEPEVFHL (153 aa)). N6-succinyllysine is present on Lys-69. At Lys-79 the chain carries N6-acetyllysine. Residue Lys-85 is modified to N6-succinyllysine. The segment at residues 179-208 (NPAKSDTITFKRLIRFVPSSLSWYGAYLVN) is an intramembrane region (note=Mitochondrial inner membrane). Residues 209–658 (AYPLDMSQYF…DALEGKSIKS (450 aa)) lie on the Mitochondrial matrix side of the membrane. Residue Lys-239 is modified to N6-acetyllysine; alternate. Lys-239 is subject to N6-succinyllysine; alternate. An N6-acetyllysine modification is found at Lys-305. His-372 acts as the Proton acceptor in catalysis. Lys-424 and Lys-439 each carry N6-succinyllysine. 452-464 (GKEFLKKQKLSPD) provides a ligand contact to CoA. Residues Tyr-486, Ser-488, and Thr-499 each contribute to the (R)-carnitine site. 2 positions are modified to N6-acetyllysine; alternate: Lys-510 and Lys-544. N6-succinyllysine; alternate occurs at positions 510 and 544.

Belongs to the carnitine/choline acetyltransferase family.

The protein localises to the mitochondrion inner membrane. The catalysed reaction is (R)-carnitine + hexadecanoyl-CoA = O-hexadecanoyl-(R)-carnitine + CoA. It carries out the reaction octanoyl-CoA + (R)-carnitine = O-octanoyl-(R)-carnitine + CoA. It catalyses the reaction decanoyl-CoA + (R)-carnitine = O-decanoyl-(R)-carnitine + CoA. The enzyme catalyses dodecanoyl-CoA + (R)-carnitine = O-dodecanoyl-R-carnitine + CoA. The catalysed reaction is tetradecanoyl-CoA + (R)-carnitine = O-tetradecanoyl-(R)-carnitine + CoA. It carries out the reaction (R)-carnitine + octadecanoyl-CoA = O-octadecanoyl-(R)-carnitine + CoA. It catalyses the reaction eicosanoyl-CoA + (R)-carnitine = O-eicosanoyl-(R)-carnitine + CoA. The enzyme catalyses (9Z)-tetradecenoyl-CoA + (R)-carnitine = O-(9Z)-tetradecenoyl-(R)-carnitine + CoA. The catalysed reaction is (5Z)-tetradecenoyl-CoA + (R)-carnitine = O-(5Z)-tetradecenoyl-(R)-carnitine + CoA. It carries out the reaction (R)-carnitine + (9Z)-octadecenoyl-CoA = O-(9Z)-octadecenoyl-(R)-carnitine + CoA. It catalyses the reaction 4,8-dimethylnonanoyl-CoA + (R)-carnitine = O-4,8-dimethylnonanoyl-(R)-carnitine + CoA. Its pathway is lipid metabolism; fatty acid beta-oxidation. Inhibited by trans-2-hexadecanoyl-CoA. In terms of biological role, involved in the intramitochondrial synthesis of acylcarnitines from accumulated acyl-CoA metabolites. Reconverts acylcarnitines back into the respective acyl-CoA esters that can then undergo beta-oxidation, an essential step for the mitochondrial uptake of long-chain fatty acids and their subsequent beta-oxidation in the mitochondrion. Active with medium (C8-C12) and long-chain (C14-C18) acyl-CoA esters. In Homo sapiens (Human), this protein is Carnitine O-palmitoyltransferase 2, mitochondrial.